The chain runs to 237 residues: Large ribosomal subunit protein uL3 (237 aa).

Disordered regions lie at residues 133-155 (ASHG…DPGK) and 213-237 (PENA…EGGE). Positions 135-150 (HGNSITHRSHGSTGQR) are enriched in polar residues. Gln-151 bears the N5-methylglutamine mark. Positions 220–237 (AGLRAGAKAEAAATEGGE) are enriched in low complexity.

This sequence belongs to the universal ribosomal protein uL3 family. In terms of assembly, part of the 50S ribosomal subunit. Forms a cluster with proteins L14 and L19. In terms of processing, methylated by PrmB.

In terms of biological role, one of the primary rRNA binding proteins, it binds directly near the 3'-end of the 23S rRNA, where it nucleates assembly of the 50S subunit. This is Large ribosomal subunit protein uL3 from Brucella abortus (strain S19).